The chain runs to 497 residues: Glycerol kinase (497 aa).

ADP is bound at residue Thr-21. ATP-binding residues include Thr-21 and Thr-22. Thr-21 serves as a coordination point for sn-glycerol 3-phosphate. Position 25 (Arg-25) interacts with ADP. Arg-88, Glu-89, Tyr-140, and Asp-244 together coordinate sn-glycerol 3-phosphate. Arg-88, Glu-89, Tyr-140, Asp-244, and Gln-245 together coordinate glycerol. Residues Thr-266 and Gly-309 each contribute to the ADP site. Residues Thr-266, Gly-309, Gln-313, and Gly-410 each coordinate ATP. ADP is bound by residues Gly-410 and Asn-414.

This sequence belongs to the FGGY kinase family.

It carries out the reaction glycerol + ATP = sn-glycerol 3-phosphate + ADP + H(+). It functions in the pathway polyol metabolism; glycerol degradation via glycerol kinase pathway; sn-glycerol 3-phosphate from glycerol: step 1/1. With respect to regulation, inhibited by fructose 1,6-bisphosphate (FBP). Key enzyme in the regulation of glycerol uptake and metabolism. Catalyzes the phosphorylation of glycerol to yield sn-glycerol 3-phosphate. This Gloeobacter violaceus (strain ATCC 29082 / PCC 7421) protein is Glycerol kinase.